The following is a 562-amino-acid chain: Catalase T (562 aa).

Residues H64 and N137 contribute to the active site. Y351 is a binding site for heme.

Belongs to the catalase family. In terms of assembly, homotetramer. Requires heme as cofactor.

The protein localises to the cytoplasm. It catalyses the reaction 2 H2O2 = O2 + 2 H2O. Functionally, occurs in almost all aerobically respiring organisms and serves to protect cells from the toxic effects of hydrogen peroxide. This is Catalase T (CTT1) from Saccharomyces cerevisiae (strain YJM789) (Baker's yeast).